The sequence spans 208 residues: Type 4 adapter protein LvgA (208 aa).

The T4BSS is a complex nanomachine composed of several subcomplexes. This subunit is part of the Type IV Coupling Complex (T4CC), a subcomplex composed of the DotLMNYZ core and the IcmSW-LvgA adapter subunits, linked by the C-terminal tail of DotL. Interacts with DotL, IcmS and IcmW. Interacts with various effector proteins, including VpdB, SetA, PieA and SidH.

The protein resides in the cytoplasm. In terms of biological role, component of the Dot/Icm type IVB secretion system (T4BSS), which is used to inject bacterial effector proteins into eukaryotic host cells. Part of a subcomplex which recruits effector proteins and delivers them to the core transmembrane subcomplex. Is a critical subunit for binding a subset of effector proteins. Recognizes more than one type of binding motif. May be a critical factor that confers host specificity. The polypeptide is Type 4 adapter protein LvgA (Legionella pneumophila subsp. pneumophila (strain Philadelphia 1 / ATCC 33152 / DSM 7513)).